The primary structure comprises 132 residues: D-ribose pyranase (132 aa).

The active-site Proton donor is the H20. Substrate-binding positions include D28, H99, and 121–123; that span reads YSN.

It belongs to the RbsD / FucU family. RbsD subfamily. As to quaternary structure, homodecamer.

The protein resides in the cytoplasm. The catalysed reaction is beta-D-ribopyranose = beta-D-ribofuranose. It functions in the pathway carbohydrate metabolism; D-ribose degradation; D-ribose 5-phosphate from beta-D-ribopyranose: step 1/2. Functionally, catalyzes the interconversion of beta-pyran and beta-furan forms of D-ribose. This is D-ribose pyranase from Pseudomonas putida (strain W619).